Reading from the N-terminus, the 413-residue chain is Transforming growth factor beta-2 proprotein (413 aa).

A signal peptide spans 1 to 19 (MHYYVLFTFLTLDLAPVAL). N-linked (GlcNAc...) asparagine glycans are attached at residues N72, N140, and N241. 4 disulfide bridges follow: C308–C317, C316–C379, C345–C410, and C349–C412.

It belongs to the TGF-beta family. In terms of assembly, interacts with Transforming growth factor beta-2 (TGF-beta-2) chain; interaction is non-covalent and maintains (TGF-beta-2) in a latent state. Homodimer; disulfide-linked. Interacts with TGF-beta receptors (tgfbr1 and tgfbr2), leading to signal transduction. In terms of processing, the precursor proprotein is cleaved in the Golgi apparatus to form Transforming growth factor beta-2 (TGF-beta-2) and Latency-associated peptide (LAP) chains, which remain non-covalently linked, rendering TGF-beta-2 inactive.

The protein resides in the secreted. It localises to the extracellular space. The protein localises to the extracellular matrix. Functionally, precursor of the Latency-associated peptide (LAP) and Transforming growth factor beta-2 (TGF-beta-2) chains, which constitute the regulatory and active subunit of TGF-beta-2, respectively. Required to maintain the Transforming growth factor beta-2 (TGF-beta-2) chain in a latent state during storage in extracellular matrix. Associates non-covalently with TGF-beta-2 and regulates its activation via interaction with 'milieu molecules', such as ltbp1 and lrrc32/garp, that control activation of TGF-beta-2. In terms of biological role, multifunctional protein that regulates various processes such as angiogenesis and heart development. Activation into mature form follows different steps: following cleavage of the proprotein in the Golgi apparatus, Latency-associated peptide (LAP) and Transforming growth factor beta-2 (TGF-beta-2) chains remain non-covalently linked rendering TGF-beta-2 inactive during storage in extracellular matrix. At the same time, LAP chain interacts with 'milieu molecules', such as ltbp1 and lrrc32/garp, that control activation of TGF-beta-2 and maintain it in a latent state during storage in extracellular milieus. Once activated following release of LAP, TGF-beta-2 acts by binding to TGF-beta receptors (tgfbr1 and tgfbr2), which transduce signal. The sequence is that of Transforming growth factor beta-2 proprotein (tgfb2) from Xenopus laevis (African clawed frog).